Consider the following 819-residue polypeptide: Zinc finger protein with KRAB and SCAN domains 5 (819 aa).

An SCAN box domain is found at 51–132 (QRFKHFQYHE…AVIESIQREL (82 aa)). Residues lysine 214, lysine 246, and lysine 302 each participate in a glycyl lysine isopeptide (Lys-Gly) (interchain with G-Cter in SUMO2) cross-link. One can recognise a KRAB domain in the interval 216-287 (EDVADVAVSF…HWVAAERTEK (72 aa)). Disordered regions lie at residues 236-263 (SQKS…KEGN) and 283-340 (ERTE…GERG). A compositionally biased stretch (basic and acidic residues) spans 240–249 (LGRDSRKEDC). Basic and acidic residues predominate over residues 329-340 (VNRKQKSNGERG). 9 consecutive C2H2-type zinc fingers follow at residues 341-363 (HRCG…RRIH), 369-391 (FKCG…QRVH), 397-419 (YKCQ…HSVH), 425-447 (YGCN…LKRH), 540-562 (HQCN…RRIH), 568-590 (FRCE…HRVH), 596-618 (YACH…QSVH), 624-646 (FKCN…LRLH), and 652-674 (HQCH…QVLH). Residue lysine 700 forms a Glycyl lysine isopeptide (Lys-Gly) (interchain with G-Cter in SUMO2) linkage. 3 C2H2-type zinc fingers span residues 708–730 (YQCD…YRTH), 764–786 (HQCN…QRIH), and 792–814 (LQCK…LRSH). A Glycyl lysine isopeptide (Lys-Gly) (interchain with G-Cter in SUMO2) cross-link involves residue lysine 776.

This sequence belongs to the krueppel C2H2-type zinc-finger protein family. In terms of tissue distribution, testis specific.

The protein localises to the nucleus. Its function is as follows. May be involved in transcriptional regulation. The sequence is that of Zinc finger protein with KRAB and SCAN domains 5 (Zkscan5) from Mus musculus (Mouse).